Here is a 469-residue protein sequence, read N- to C-terminus: Glutamine synthetase (469 aa).

The 86-residue stretch at 12-97 folds into the GS beta-grasp domain; sequence HDVKWVDLRF…LVCDIIEPST (86 aa). In terms of domain architecture, GS catalytic spans 105–469; that stretch reads PRNIAKRAEE…PLEYDLYYSV (365 aa). Positions 130 and 132 each coordinate Mg(2+). Glu208 contacts ATP. 2 residues coordinate Mg(2+): Glu213 and Glu221. L-glutamate contacts are provided by residues 265–266 and Gly266; that span reads NG. His270 serves as a coordination point for Mg(2+). ATP is bound by residues 272–274 and Ser274; that span reads HMS. Arg322, Glu328, and Arg340 together coordinate L-glutamate. ATP is bound by residues Arg340, Arg345, and Lys353. Mg(2+) is bound at residue Glu358. Arg360 provides a ligand contact to L-glutamate. At Tyr398 the chain carries O-AMP-tyrosine.

It belongs to the glutamine synthetase family. As to quaternary structure, oligomer of 12 subunits arranged in the form of two hexameric ring. Mg(2+) is required as a cofactor.

Its subcellular location is the cytoplasm. It catalyses the reaction L-glutamate + NH4(+) + ATP = L-glutamine + ADP + phosphate + H(+). The activity of this enzyme could be controlled by adenylation under conditions of abundant glutamine. In terms of biological role, catalyzes the ATP-dependent biosynthesis of glutamine from glutamate and ammonia. This Pseudomonas aeruginosa (strain ATCC 15692 / DSM 22644 / CIP 104116 / JCM 14847 / LMG 12228 / 1C / PRS 101 / PAO1) protein is Glutamine synthetase.